Here is a 322-residue protein sequence, read N- to C-terminus: Undecaprenyl-phosphate 4-deoxy-4-formamido-L-arabinose transferase (322 aa).

Residues 1–235 are Cytoplasmic-facing; sequence MFEIHPVKKV…TCLTTTPLRM (235 aa). A helical membrane pass occupies residues 236-256; sequence LSLLGSIIAIGGFSIAVLLVI. Residues 257 to 269 lie on the Periplasmic side of the membrane; that stretch reads LRLTFGPQWAAEG. Residues 270–290 form a helical membrane-spanning segment; the sequence is VFMLFAVLFTFIGAQFIGMGL. Residues 291-322 lie on the Cytoplasmic side of the membrane; the sequence is LGEYIGRIYTDVRARPRYFVQQVIRPSSKENE.

The protein belongs to the glycosyltransferase 2 family.

It localises to the cell inner membrane. The catalysed reaction is UDP-4-deoxy-4-formamido-beta-L-arabinose + di-trans,octa-cis-undecaprenyl phosphate = 4-deoxy-4-formamido-alpha-L-arabinopyranosyl di-trans,octa-cis-undecaprenyl phosphate + UDP. Its pathway is glycolipid biosynthesis; 4-amino-4-deoxy-alpha-L-arabinose undecaprenyl phosphate biosynthesis; 4-amino-4-deoxy-alpha-L-arabinose undecaprenyl phosphate from UDP-4-deoxy-4-formamido-beta-L-arabinose and undecaprenyl phosphate: step 1/2. It functions in the pathway bacterial outer membrane biogenesis; lipopolysaccharide biosynthesis. Functionally, catalyzes the transfer of 4-deoxy-4-formamido-L-arabinose from UDP to undecaprenyl phosphate. The modified arabinose is attached to lipid A and is required for resistance to polymyxin and cationic antimicrobial peptides. This Shigella sonnei (strain Ss046) protein is Undecaprenyl-phosphate 4-deoxy-4-formamido-L-arabinose transferase.